We begin with the raw amino-acid sequence, 207 residues long: Sodium/potassium-transporting ATPase subunit beta-1-interacting protein 1 (207 aa).

A run of 3 helical transmembrane segments spans residues 2–22, 35–55, and 62–82; these read GRCDGRCTLVVICCLQLVAAL, APILANFLHIMAVILGVFGTV, and LILYAVWLVVWVGWNSFIICF. N-linked (GlcNAc...) asparagine glycosylation occurs at asparagine 100. Residues 147–167 traverse the membrane as a helical segment; it reads VVSSALQVFLALFGFVYACYV.

This sequence belongs to the NKAIN family. Interacts with atp1b1 C-terminus.

Its subcellular location is the cell membrane. The sequence is that of Sodium/potassium-transporting ATPase subunit beta-1-interacting protein 1 (nkain1) from Danio rerio (Zebrafish).